We begin with the raw amino-acid sequence, 868 residues long: uncharacterized protein (868 aa).

The protein resides in the cytoplasm. The protein localises to the nucleus. This is an uncharacterized protein from Schizosaccharomyces pombe (strain 972 / ATCC 24843) (Fission yeast).